Here is a 179-residue protein sequence, read N- to C-terminus: ATP synthase subunit delta (179 aa).

Belongs to the ATPase delta chain family. As to quaternary structure, F-type ATPases have 2 components, F(1) - the catalytic core - and F(0) - the membrane proton channel. F(1) has five subunits: alpha(3), beta(3), gamma(1), delta(1), epsilon(1). F(0) has three main subunits: a(1), b(2) and c(10-14). The alpha and beta chains form an alternating ring which encloses part of the gamma chain. F(1) is attached to F(0) by a central stalk formed by the gamma and epsilon chains, while a peripheral stalk is formed by the delta and b chains.

It is found in the cell inner membrane. Its function is as follows. F(1)F(0) ATP synthase produces ATP from ADP in the presence of a proton or sodium gradient. F-type ATPases consist of two structural domains, F(1) containing the extramembraneous catalytic core and F(0) containing the membrane proton channel, linked together by a central stalk and a peripheral stalk. During catalysis, ATP synthesis in the catalytic domain of F(1) is coupled via a rotary mechanism of the central stalk subunits to proton translocation. Functionally, this protein is part of the stalk that links CF(0) to CF(1). It either transmits conformational changes from CF(0) to CF(1) or is implicated in proton conduction. This Paraburkholderia phytofirmans (strain DSM 17436 / LMG 22146 / PsJN) (Burkholderia phytofirmans) protein is ATP synthase subunit delta.